A 195-amino-acid chain; its full sequence is Holliday junction branch migration complex subunit RuvA (195 aa).

Positions 1-64 (MIASIRGIIQ…EDALTLYGFS (64 aa)) are domain I. A domain II region spans residues 65–142 (DPAQRNLFEQ…DLRQLSGTTP (78 aa)). The flexible linker stretch occupies residues 143 to 151 (GNVSTLDRE). The domain III stretch occupies residues 151-195 (ELTDILISLGYSATEAAAAIAALPGDAPPTLEERLRLALRYFGSA).

It belongs to the RuvA family. As to quaternary structure, homotetramer. Forms an RuvA(8)-RuvB(12)-Holliday junction (HJ) complex. HJ DNA is sandwiched between 2 RuvA tetramers; dsDNA enters through RuvA and exits via RuvB. An RuvB hexamer assembles on each DNA strand where it exits the tetramer. Each RuvB hexamer is contacted by two RuvA subunits (via domain III) on 2 adjacent RuvB subunits; this complex drives branch migration. In the full resolvosome a probable DNA-RuvA(4)-RuvB(12)-RuvC(2) complex forms which resolves the HJ.

Its subcellular location is the cytoplasm. Functionally, the RuvA-RuvB-RuvC complex processes Holliday junction (HJ) DNA during genetic recombination and DNA repair, while the RuvA-RuvB complex plays an important role in the rescue of blocked DNA replication forks via replication fork reversal (RFR). RuvA specifically binds to HJ cruciform DNA, conferring on it an open structure. The RuvB hexamer acts as an ATP-dependent pump, pulling dsDNA into and through the RuvAB complex. HJ branch migration allows RuvC to scan DNA until it finds its consensus sequence, where it cleaves and resolves the cruciform DNA. In Chloroflexus aurantiacus (strain ATCC 29364 / DSM 637 / Y-400-fl), this protein is Holliday junction branch migration complex subunit RuvA.